The primary structure comprises 180 residues: Meiotic recombination protein rec15 (180 aa).

In terms of assembly, homomer. Interacts (via C-terminus) with hop1 (via C-terminus); the interaction is direct. Interacts (via C-terminus) with rec10; the interaction is direct. Interacts with mde2; the interaction is direct.

The protein resides in the nucleus. The protein localises to the chromosome. In terms of biological role, required during the early stages of meiosis for meiotic recombination. This Schizosaccharomyces pombe (strain 972 / ATCC 24843) (Fission yeast) protein is Meiotic recombination protein rec15.